A 557-amino-acid polypeptide reads, in one-letter code: Formate--tetrahydrofolate ligase 2 (557 aa).

Residue 66 to 73 (TPAGEGKT) participates in ATP binding.

It belongs to the formate--tetrahydrofolate ligase family.

The enzyme catalyses (6S)-5,6,7,8-tetrahydrofolate + formate + ATP = (6R)-10-formyltetrahydrofolate + ADP + phosphate. The protein operates within one-carbon metabolism; tetrahydrofolate interconversion. This chain is Formate--tetrahydrofolate ligase 2, found in Streptococcus pyogenes serotype M5 (strain Manfredo).